The sequence spans 326 residues: Ribosomal RNA small subunit methyltransferase H (326 aa).

S-adenosyl-L-methionine contacts are provided by residues 35 to 37, Asp53, Phe80, Asp101, and Gln108; that span reads GGY. Residues 260–306 form a disordered region; sequence EGVSRHLPQASNAGAGNPPPSFQAVSRRAVKPLDAETRVNPRSRSAR.

It belongs to the methyltransferase superfamily. RsmH family.

The protein resides in the cytoplasm. It carries out the reaction cytidine(1402) in 16S rRNA + S-adenosyl-L-methionine = N(4)-methylcytidine(1402) in 16S rRNA + S-adenosyl-L-homocysteine + H(+). Specifically methylates the N4 position of cytidine in position 1402 (C1402) of 16S rRNA. The protein is Ribosomal RNA small subunit methyltransferase H of Rhodospirillum rubrum (strain ATCC 11170 / ATH 1.1.1 / DSM 467 / LMG 4362 / NCIMB 8255 / S1).